The chain runs to 160 residues: Protein max (160 aa).

The segment covering 1–13 (MSDNDDIEVESDE) has biased composition (acidic residues). The interval 1 to 40 (MSDNDDIEVESDEEQPRFQSAADKRAHHNALERKRRDHIK) is disordered. Position 2 is an N-acetylserine (Ser-2). Phosphoserine is present on residues Ser-2 and Ser-11. A bHLH domain is found at 23–74 (DKRAHHNALERKRRDHIKDSFHSLRDSVPSLQGEKASRAQILDKATEYIQYM). Residues 29-40 (NALERKRRDHIK) show a composition bias toward basic and acidic residues. N6-acetyllysine is present on Lys-66. The interval 81–102 (HQQDIDDLKRQNALLEQQVRAL) is leucine-zipper. Residues 103-160 (EKARSSAQLQTNYPSSDNSLYTNAKGSTISAFDGGSDSSSESEPEEPQSRKKLRMEAS) are disordered. Residue Ser-107 is modified to Phosphoserine. Positions 107–132 (SSAQLQTNYPSSDNSLYTNAKGSTIS) are enriched in polar residues. A Nuclear localization signal motif is present at residues 152–156 (RKKLR). N6-acetyllysine is present on residues Lys-153 and Lys-154.

The protein belongs to the MAX family. In terms of assembly, efficient DNA binding requires dimerization with another bHLH protein. Binds DNA as a heterodimer with MYC or MAD. Part of the E2F6.com-1 complex in G0 phase composed of E2F6, MGA, MAX, TFDP1, CBX3, BAT8, EUHMTASE1, RING1, RNF2, MBLR, L3MBTL2 and YAF2. Component of some MLL1/MLL complex, at least composed of the core components KMT2A/MLL1, ASH2L, HCFC1/HCF1, WDR5 and RBBP5, as well as the facultative components BACC1, CHD8, E2F6, HSP70, INO80C, KANSL1, LAS1L, MAX, MCRS1, MGA, MYST1/MOF, PELP1, PHF20, PRP31, RING2, RUVB1/TIP49A, RUVB2/TIP49B, SENP3, TAF1, TAF4, TAF6, TAF7, TAF9 and TEX10. Interacts with SPAG9. The heterodimer MYC:MAX interacts with ABI1; the interaction may enhance MYC:MAX transcriptional activity. Reversible lysine acetylation might regulate the nuclear-cytoplasmic shuttling of specific Max complexes. As to expression, high levels found in the brain, heart and lung while lower levels are seen in the liver, kidney and skeletal muscle.

Its subcellular location is the nucleus. The protein localises to the cell projection. It is found in the dendrite. In terms of biological role, transcription regulator. Forms a sequence-specific DNA-binding protein complex with MYC or MAD which recognizes the core sequence 5'-CAC[GA]TG-3'. The MYC:MAX complex is a transcriptional activator, whereas the MAD:MAX complex is a repressor. May repress transcription via the recruitment of a chromatin remodeling complex containing H3 'Lys-9' histone methyltransferase activity. Represses MYC transcriptional activity from E-box elements. In Homo sapiens (Human), this protein is Protein max.